Consider the following 497-residue polypeptide: MEMMILISLCLTTFLTILLFFKSLLKRPNSNLPPSPWRLPVIGNLHQLSLHPHRALSSLSARHGPLMLLRFGRVPVLIVSSADVAHDVMKTHDLKFANRPITKSAHKISNGGRDLVFAPYGEYWRNVKSLCTIHLLSNKMVQSSEKRREEEITLLMETLEEASLSSSSVNLSKLITNMVSDIMGKVVLGKKYSGEEGTIDVKTITKSFLDAVGLSPVGEYIPSLAWIGKITGSDGKLEKITKQFGDFIEKVLQEHEDTTADKETPDFVDMLLTIQRDETAQCQLDKSDLKVIIFEMFLGSTTTTSAVIEWAMTRLMRNPECLKKLQDEIRSVSKMNSYVSGKEVENMNYLKAVIKEVLRLHPPLPLLVPRLLSEDVKLKGYDITAGTQVIINAWAIQRDTATWGSDAQEFRPERHFDSTWDFVGRNFKYIPFGAGRRLCPGIGLGSVMASVTLANLVKRFDWRVEDGPSGYDKPDLVEGAGIDVCRKFPLVVFPSSA.

Residues 1-21 (MEMMILISLCLTTFLTILLFF) form a helical membrane-spanning segment. A heme-binding site is contributed by C439.

The protein belongs to the cytochrome P450 family. Heme serves as cofactor.

The protein localises to the membrane. Functionally, possesses triterpene oxidizing activity. Catalyzes the C23 hydroxylation of marneral to form 23-hydroxymarneral. Catalyzes the C23 hydroxylation of marnerol to form 23-hydroxymarnerol. In Arabidopsis thaliana (Mouse-ear cress), this protein is Cytochrome P450 71A16 (CYP71A16).